The chain runs to 165 residues: Ubiquitin-conjugating enzyme E2 G2 (165 aa).

At Ala2 the chain carries N-acetylalanine. The 161-residue stretch at 4–164 (TALKRLMAEY…AKQIVQKSLG (161 aa)) folds into the UBC core domain. The active-site Glycyl thioester intermediate is Cys89.

Belongs to the ubiquitin-conjugating enzyme family. As to quaternary structure, interacts with AUP1 (via C-terminus); the interaction recruits UBE2G2 to lipid droplets. Interacts with ubiquitin ligases AMFR/gp78 and RNF139/TRC8; recruitment to lipid droplets by AUP1 facilitates interaction of UBE2G2 with AMFR and RNF139, leading to sterol-induced ubiquitination of 3-hydroxy-3-methylglutaryl coenzyme A reductase and its subsequent proteasomal degradation.

It is found in the endoplasmic reticulum. Its subcellular location is the lipid droplet. The enzyme catalyses S-ubiquitinyl-[E1 ubiquitin-activating enzyme]-L-cysteine + [E2 ubiquitin-conjugating enzyme]-L-cysteine = [E1 ubiquitin-activating enzyme]-L-cysteine + S-ubiquitinyl-[E2 ubiquitin-conjugating enzyme]-L-cysteine.. The protein operates within protein modification; protein ubiquitination. Its function is as follows. Accepts ubiquitin from the E1 complex and catalyzes its covalent attachment to other proteins. In vitro catalyzes 'Lys-48'-linked polyubiquitination. Involved in endoplasmic reticulum-associated degradation (ERAD). Required for sterol-induced ubiquitination of 3-hydroxy-3-methylglutaryl coenzyme A reductase and its subsequent proteasomal degradation. The protein is Ubiquitin-conjugating enzyme E2 G2 of Homo sapiens (Human).